A 214-amino-acid polypeptide reads, in one-letter code: Ras-related protein RABA2b (214 aa).

A GTP-binding site is contributed by 19-26; sequence GDSGVGKS. The short motif at 41-49 is the Effector region element; the sequence is SKSTIGVEF. Residues 67–71, 125–128, and 155–156 each bind GTP; these read DTAGQ, NKSD, and SA. 2 S-geranylgeranyl cysteine lipidation sites follow: C211 and C212.

This sequence belongs to the small GTPase superfamily. Rab family. In terms of tissue distribution, expressed in root tips.

It is found in the endosome membrane. The protein localises to the golgi apparatus. It localises to the trans-Golgi network membrane. Functionally, intracellular vesicle trafficking and protein transport. In Arabidopsis thaliana (Mouse-ear cress), this protein is Ras-related protein RABA2b (RABA2B).